Reading from the N-terminus, the 454-residue chain is UDP-N-acetylmuramoylalanine--D-glutamate ligase (454 aa).

Residue glycine 116–serine 122 coordinates ATP.

Belongs to the MurCDEF family.

The protein localises to the cytoplasm. It carries out the reaction UDP-N-acetyl-alpha-D-muramoyl-L-alanine + D-glutamate + ATP = UDP-N-acetyl-alpha-D-muramoyl-L-alanyl-D-glutamate + ADP + phosphate + H(+). The protein operates within cell wall biogenesis; peptidoglycan biosynthesis. Cell wall formation. Catalyzes the addition of glutamate to the nucleotide precursor UDP-N-acetylmuramoyl-L-alanine (UMA). In Lachnoclostridium phytofermentans (strain ATCC 700394 / DSM 18823 / ISDg) (Clostridium phytofermentans), this protein is UDP-N-acetylmuramoylalanine--D-glutamate ligase.